An 851-amino-acid polypeptide reads, in one-letter code: B-box type zinc finger protein ncl-1 (851 aa).

The disordered stretch occupies residues 71 to 91 (GFGFGSPSSTTSSSPPLSNSP). Low complexity predominate over residues 76 to 91 (SPSSTTSSSPPLSNSP). Residues 127 to 174 (VPAVHCSGCKSNETATSFCQDCNANLCDNCTMAHKFMHCFADHRVVSL) form a B box-type 1; atypical zinc finger. Residues cysteine 132, cysteine 135, cysteine 156, and histidine 160 each coordinate Zn(2+). Residues 176–197 (TPGTGSSSSSTSSSSSASSTSS) are compositionally biased toward low complexity. The tract at residues 176 to 211 (TPGTGSSSSSTSSSSSASSTSSHQVPSLGGKQSPDS) is disordered. The B box-type 2 zinc finger occupies 218–261 (KRSVLCLQHRASELVFFCVSCNLAICRDCTVSDHPSGTHQYELI). Residues cysteine 223, histidine 226, cysteine 246, and histidine 251 each coordinate Zn(2+). A coiled-coil region spans residues 303–331 (SLHNAHAQLEETVSNLINVIQDQKKTLAK). NHL repeat units lie at residues 573-616 (HCKF…FDKE), 620-665 (KFQF…YNQY), 666-707 (GQFL…FDMF), 708-750 (GNIL…FSYE), and 751-794 (GQYL…FSQD).

As to expression, present in cells in which nucleoli are absent, and absent from large cells in which nucleoli are prominent. Highly expressed in the gonads.

It is found in the cytoplasm. Translational repressor that inhibits protein synthesis. Represses the translation of mRNAs such as fib-1, probably by being recruited by RNA-binding protein nos-2 and the Pumilio proteins puf-5, puf-8 and puf-9 to the consensus core PUF binding motif in the 3'-UTR of fib-1 mRNA. Negatively regulates ribosomal RNA (rRNA) synthesis, ribosomal protein synthesis and nucleolus size. Its role in the negative regulation of nucleolus size is most likely through its negative regulation of the translation of proteins such as the rRNA 2'-O-methyltransferase fib-1, and dao-5. Might act directly as a transcription factor to inhibit RNA polymerase I (rRNA) and III (5S RNA) transcription. Plays a role in embryonic development, and in particular, is involved in regulating the localization of proteins, such as par-2, that are required for embryonic cell polarity. Plays a role in the regulation of lifespan, and the response to nutrient availability. The polypeptide is B-box type zinc finger protein ncl-1 (Caenorhabditis elegans).